Consider the following 209-residue polypeptide: uncharacterized protein (209 aa).

2 disordered regions span residues 1-80 (MFVR…PPVE) and 164-197 (LPAG…PGME). Residues 178 to 189 (SRGSSRSSCSQR) show a composition bias toward low complexity.

This is an uncharacterized protein from Homo sapiens (Human).